The sequence spans 507 residues: Subtilisin-like protease 1 (507 aa).

An N-terminal signal peptide occupies residues 1–19; it reads MGVFRFISISLAAVSAANA. Positions 20-116 are excised as a propeptide; that stretch reads AQILSMPHAQ…VEPDTIISVN (97 aa). The Inhibitor I9 domain occupies 34–113; sequence SYIVMMKDDT…VMFVEPDTII (80 aa). The Peptidase S8 domain occupies 126-400; it reads SWGLARISNS…NVLISNGGAK (275 aa). Active-site charge relay system residues include Asp158 and His190. The disordered stretch occupies residues 175–198; that stretch reads GSNQVNDGDDRDGSGHGTHTSGTM. A glycan (N-linked (GlcNAc...) asparagine) is linked at Asn251. Positions 282-294 are enriched in polar residues; the sequence is NENQDARSSSPAS. The tract at residues 282–312 is disordered; the sequence is NENQDARSSSPASEPSVCTVGSSAEDDSRSS. Ser345 acts as the Charge relay system in catalysis. A compositionally biased stretch (polar residues) spans 378–394; it reads SSSITDVGPGTPTNVLI. Residues 378 to 486 are disordered; it reads SSSITDVGPG…YPGGDNFDFD (109 aa). Composition is skewed to pro residues over residues 405-428 and 438-449; these read KPAPGPSPNPSQPSEPQQPAPSQP and EPFPGEPFPGEP. Residues 450–461 show a composition bias toward low complexity; sequence FPGESSPGESAP. The span at 462 to 476 shows a compositional bias: pro residues; that stretch reads APAPMPPSPQHPHTP.

It belongs to the peptidase S8 family.

It localises to the secreted. Secreted subtilisin-like serine protease with keratinolytic activity that contributes to pathogenicity. The sequence is that of Subtilisin-like protease 1 (SUB1) from Trichophyton tonsurans (Scalp ringworm fungus).